The chain runs to 403 residues: Tyrosine--tRNA ligase (403 aa).

The short motif at 42–51 is the 'HIGH' region element; sequence PTAPDLHLGH. The 'KMSKS' region motif lies at 226–230; sequence KMSKS. K229 serves as a coordination point for ATP. The S4 RNA-binding domain occupies 339-400; the sequence is LRLAGLLTAA…GKRNFARVSL (62 aa).

This sequence belongs to the class-I aminoacyl-tRNA synthetase family. TyrS type 2 subfamily. Homodimer.

Its subcellular location is the cytoplasm. It carries out the reaction tRNA(Tyr) + L-tyrosine + ATP = L-tyrosyl-tRNA(Tyr) + AMP + diphosphate + H(+). Functionally, catalyzes the attachment of tyrosine to tRNA(Tyr) in a two-step reaction: tyrosine is first activated by ATP to form Tyr-AMP and then transferred to the acceptor end of tRNA(Tyr). The sequence is that of Tyrosine--tRNA ligase from Xanthomonas axonopodis pv. citri (strain 306).